We begin with the raw amino-acid sequence, 381 residues long: Dual-specificity RNA methyltransferase RlmN (381 aa).

E95 functions as the Proton acceptor in the catalytic mechanism. Residues 101-339 (DGRRGTLCVS…MTTVRTTRGD (239 aa)) enclose the Radical SAM core domain. C108 and C345 are disulfide-bonded. C115, C119, and C122 together coordinate [4Fe-4S] cluster. S-adenosyl-L-methionine-binding positions include 169-170 (GE), S201, 223-225 (SLH), and N302. The active-site S-methylcysteine intermediate is the C345.

Belongs to the radical SAM superfamily. RlmN family. The cofactor is [4Fe-4S] cluster.

The protein localises to the cytoplasm. The enzyme catalyses adenosine(2503) in 23S rRNA + 2 reduced [2Fe-2S]-[ferredoxin] + 2 S-adenosyl-L-methionine = 2-methyladenosine(2503) in 23S rRNA + 5'-deoxyadenosine + L-methionine + 2 oxidized [2Fe-2S]-[ferredoxin] + S-adenosyl-L-homocysteine. It catalyses the reaction adenosine(37) in tRNA + 2 reduced [2Fe-2S]-[ferredoxin] + 2 S-adenosyl-L-methionine = 2-methyladenosine(37) in tRNA + 5'-deoxyadenosine + L-methionine + 2 oxidized [2Fe-2S]-[ferredoxin] + S-adenosyl-L-homocysteine. Its function is as follows. Specifically methylates position 2 of adenine 2503 in 23S rRNA and position 2 of adenine 37 in tRNAs. m2A2503 modification seems to play a crucial role in the proofreading step occurring at the peptidyl transferase center and thus would serve to optimize ribosomal fidelity. In Alcanivorax borkumensis (strain ATCC 700651 / DSM 11573 / NCIMB 13689 / SK2), this protein is Dual-specificity RNA methyltransferase RlmN.